The chain runs to 940 residues: MGSGPIDPKELLKGLDSFLNRDGEVKSVDGISKIFSLMKEARKMVSRCTYLNILLQTRSPEILIKFIDVGGYKLLNNWLTYSKTTNNIPLLQQILLTLQHLPLTVDHLKQNNTAKLVKQLSKSSEDEELRKLASVLVSDWMAVIRSQSSTQPAEKDKKKRKDEGKSRTTPPERPLTEVKAETRAEEAPEKKREKPKSLRTTAPSHAKFRSTGLELETPSLVPVKKNASTVVVSDKYNLKPIPLKRQSNVAAPGDATPPAEKKYKPLNTTPNATKEIKVKIIPPQPMEGLGFLDALNSAPVPGIKIKKKKKVLSPTAAKPSPFEGKTSTEPSTAKPSSPEPAPPSEAMDIDRPGTPVPPVEVPELMDTASLEPGALDAKPVESPGDPNQLTRKGRKRKSVTWPEEGKLREYFYFELDETERVNVNKIKDFGEAAKREILSDRHAFETARRLSHDNMEEKVPWVCPRPLVLPSPLVTPGSNSQERYIQAEREKGILQELFLNKESPHEPDPEPYEPIPPKLIPLDEECSMDETPYVETLEPGGSGGSPDGAGGSKLPPVLANLMGSMGAGKGPQGPGGGGINVQEILTSIMGSPNSHPSEELLKQPDYSDKIKQMLVPHGLLGPGPIANGFPPGGPGGPKGMQHFPPGPGGPMPGPHGGPGGPVGPRLLGPPPPPRGGDPFWDGPGDPMRGGPMRGGPGPGPGPYHRGRGGRGGNEPPPPPPPPFRGARGGRSGGGPPNGRGGPGGGMVGGGGHRPHEGPGGGMGNSSGHRPHEGPGSGMGSGHRPHEGPGSSMGGGGGHRPHEGPGGGISGGSGHRPHEGPGGGMGAGGGHRPHEGPGGSMGGSGGHRPHEGPGHGGPHGHRPHDVPGHRGHDHRGPPHEHRGHDGPGHGGGGHRGHDGGHSHGGDMSNRPVCRHFMMKGNCRYENNCAFYHPGVNGPPLP.

The interaction with TOX4 stretch occupies residues methionine 1–aspartate 348. The TFIIS N-terminal domain maps to lysine 73 to glutamine 147. 4 disordered regions span residues glutamine 147–threonine 211, serine 247–proline 270, lysine 304–threonine 400, and tyrosine 533–aspartate 905. Composition is skewed to basic and acidic residues over residues alanine 153–serine 166 and proline 174–lysine 196. A Glycyl lysine isopeptide (Lys-Gly) (interchain with G-Cter in SUMO2) cross-link involves residue lysine 179. A Phosphothreonine modification is found at threonine 256. A Glycyl lysine isopeptide (Lys-Gly) (interchain with G-Cter in SUMO2) cross-link involves residue lysine 262. At serine 313 the chain carries Phosphoserine. Low complexity predominate over residues lysine 325–serine 336. Positions proline 357–alanine 433 are necessary for interaction with PPP1CA. Serine 382 carries the phosphoserine modification. Positions glycine 393–arginine 408 are necessary for interaction with PPP1CC. The PP1-binding motif signature appears at arginine 394–valine 423. Serine 398 carries the post-translational modification Phosphoserine; by PKA. The tract at residues threonine 418–leucine 619 is interaction with WDR82. Gly residues-rich tracts occupy residues glycine 540–glycine 551 and methionine 565–isoleucine 579. Serine 545 bears the Phosphoserine mark. Polar residues predominate over residues glutamate 583 to histidine 595. Serine 591 carries the post-translational modification Phosphoserine. Residues proline 596–lysine 611 are compositionally biased toward basic and acidic residues. Residues proline 644–histidine 655 are compositionally biased toward pro residues. An Omega-N-methylarginine modification is found at arginine 665. Positions glycine 676 to glycine 690 are enriched in low complexity. Arginine 693 is subject to Omega-N-methylarginine. Over residues glutamate 714–phenylalanine 723 the composition is skewed to pro residues. Gly residues-rich tracts occupy residues alanine 726 to asparagine 764 and serine 790 to glycine 845. Arginine 739 bears the Omega-N-methylarginine mark. 2 stretches are compositionally biased toward basic and acidic residues: residues proline 862–proline 886 and arginine 894–glycine 903. The C3H1-type zinc-finger motif lies at methionine 906–valine 934.

Component of the PNUTS-PP1 complex (also named PTW/PP1 complex), composed of PPP1R10/PNUTS, TOX4, WDR82, and PPP1CA (or PPP1CB or PPP1CC). Phosphorylated on Ser-398 by PKA within the region necessary for interaction with PPP1CA.

It is found in the nucleus. The protein resides in the chromosome. Functionally, substrate-recognition component of the PNUTS-PP1 protein phosphatase complex, a protein phosphatase 1 (PP1) complex that promotes RNA polymerase II transcription pause-release, allowing transcription elongation. Promoter-proximal pausing by RNA polymerase II is a transcription halt following transcription initiation but prior to elongation, which acts as a checkpoint to control that transcripts are favorably configured for transcriptional elongation. The PNUTS-PP1 complex mediates the release of RNA polymerase II from promoter-proximal region of genes by catalyzing dephosphorylation of proteins involved in transcription, such as AFF4, CDK9, MEPCE, INTS12, NCBP1, POLR2M/GDOWN1 and SUPT6H. The PNUTS-PP1 complex also regulates RNA polymerase II transcription termination by mediating dephosphorylation of SUPT5H in termination zones downstream of poly(A) sites, thereby promoting deceleration of RNA polymerase II transcription. PNUTS-PP1 complex is also involved in the response to replication stress by mediating dephosphorylation of POLR2A at 'Ser-5' of the CTD, promoting RNA polymerase II degradation. The PNUTS-PP1 complex also plays a role in the control of chromatin structure and cell cycle progression during the transition from mitosis into interphase. PNUTS-PP1 complex mediates dephosphorylation of MYC, promoting MYC stability by preventing MYC ubiquitination by the SCF(FBXW7) complex. In addition to acts as a substrate-recognition component, PPP1R10/PNUTS also acts as a nuclear targeting subunit for the PNUTS-PP1 complex. In some context, PPP1R10/PNUTS also acts as an inhibitor of protein phosphatase 1 (PP1) activity by preventing access to substrates, such as RB. In Macaca mulatta (Rhesus macaque), this protein is Serine/threonine-protein phosphatase 1 regulatory subunit 10 (PPP1R10).